Consider the following 446-residue polypeptide: Probable D-serine dehydratase (446 aa).

An N6-(pyridoxal phosphate)lysine modification is found at K116.

This sequence belongs to the serine/threonine dehydratase family. DsdA subfamily. Pyridoxal 5'-phosphate is required as a cofactor.

The enzyme catalyses D-serine = pyruvate + NH4(+). This Bacillus cereus (strain ZK / E33L) protein is Probable D-serine dehydratase.